The chain runs to 156 residues: 3-dehydroquinate dehydratase 1 (156 aa).

Catalysis depends on Y32, which acts as the Proton acceptor. Residues N84, H90, and D97 each contribute to the substrate site. Residue H110 is the Proton donor of the active site. Residues 111-112 (LS) and R121 each bind substrate.

Belongs to the type-II 3-dehydroquinase family. In terms of assembly, homododecamer.

The enzyme catalyses 3-dehydroquinate = 3-dehydroshikimate + H2O. The protein operates within metabolic intermediate biosynthesis; chorismate biosynthesis; chorismate from D-erythrose 4-phosphate and phosphoenolpyruvate: step 3/7. Functionally, catalyzes a trans-dehydration via an enolate intermediate. In Ralstonia nicotianae (strain ATCC BAA-1114 / GMI1000) (Ralstonia solanacearum), this protein is 3-dehydroquinate dehydratase 1 (aroQ1).